We begin with the raw amino-acid sequence, 224 residues long: Holliday junction branch migration complex subunit RuvA (224 aa).

Residues 1–64 (MIGKVAGILD…EDLLQLFGFP (64 aa)) form a domain I region. A domain II region spans residues 65-143 (TMIEKEWHRL…ALMAMGGGTA (79 aa)). A disordered region spans residues 141 to 185 (GTAALAPSEPPEPQPGTSSGSRRKTRAPEPPRPSHTADALSALAN). Residues 144-170 (ALAPSEPPEPQPGTSSGSRRKTRAPEP) are flexible linker. The tract at residues 171–224 (PRPSHTADALSALANLGYQPTDAAQAVAQAAGESPDADTAALIRAALKLLAPKS) is domain III.

Belongs to the RuvA family. Homotetramer. Forms an RuvA(8)-RuvB(12)-Holliday junction (HJ) complex. HJ DNA is sandwiched between 2 RuvA tetramers; dsDNA enters through RuvA and exits via RuvB. An RuvB hexamer assembles on each DNA strand where it exits the tetramer. Each RuvB hexamer is contacted by two RuvA subunits (via domain III) on 2 adjacent RuvB subunits; this complex drives branch migration. In the full resolvosome a probable DNA-RuvA(4)-RuvB(12)-RuvC(2) complex forms which resolves the HJ.

The protein resides in the cytoplasm. In terms of biological role, the RuvA-RuvB-RuvC complex processes Holliday junction (HJ) DNA during genetic recombination and DNA repair, while the RuvA-RuvB complex plays an important role in the rescue of blocked DNA replication forks via replication fork reversal (RFR). RuvA specifically binds to HJ cruciform DNA, conferring on it an open structure. The RuvB hexamer acts as an ATP-dependent pump, pulling dsDNA into and through the RuvAB complex. HJ branch migration allows RuvC to scan DNA until it finds its consensus sequence, where it cleaves and resolves the cruciform DNA. The polypeptide is Holliday junction branch migration complex subunit RuvA (Cereibacter sphaeroides (strain KD131 / KCTC 12085) (Rhodobacter sphaeroides)).